The chain runs to 322 residues: DNA repair and recombination protein RadA (322 aa).

Residue 105–112 (GMFGSGKT) coordinates ATP.

It belongs to the eukaryotic RecA-like protein family.

Involved in DNA repair and in homologous recombination. Binds and assemble on single-stranded DNA to form a nucleoprotein filament. Hydrolyzes ATP in a ssDNA-dependent manner and promotes DNA strand exchange between homologous DNA molecules. The protein is DNA repair and recombination protein RadA of Methanococcus maripaludis (strain DSM 14266 / JCM 13030 / NBRC 101832 / S2 / LL).